A 58-amino-acid chain; its full sequence is uncharacterized protein (58 aa).

A helical transmembrane segment spans residues 24 to 44 (LSVYLGLATTIVCIVLFFTML).

It localises to the membrane. This is an uncharacterized protein from Haemophilus influenzae (strain ATCC 51907 / DSM 11121 / KW20 / Rd).